Reading from the N-terminus, the 546-residue chain is Probable protein kinase UbiB (546 aa).

The 379-residue stretch at 123-501 folds into the Protein kinase domain; sequence DFQEIPLASA…RTNHGQALFL (379 aa). ATP contacts are provided by residues 129-137 and lysine 152; that span reads LASASISQV. The active-site Proton acceptor is the aspartate 287. 2 helical membrane passes run 497 to 517 and 521 to 541; these read QALFLFGVGATLVTSSIFLYI and YLKIFSIFLFVIGIFIWTIGW.

This sequence belongs to the ABC1 family. UbiB subfamily.

Its subcellular location is the cell inner membrane. The protein operates within cofactor biosynthesis; ubiquinone biosynthesis [regulation]. Is probably a protein kinase regulator of UbiI activity which is involved in aerobic coenzyme Q (ubiquinone) biosynthesis. The polypeptide is Probable protein kinase UbiB (Blochmanniella pennsylvanica (strain BPEN)).